A 365-amino-acid polypeptide reads, in one-letter code: tRNA-specific 2-thiouridylase MnmA (365 aa).

ATP contacts are provided by residues 9–16 and Met-35; that span reads GLSGGVDS. The interval 95–97 is interaction with target base in tRNA; it reads NPD. Residue Cys-100 is the Nucleophile of the active site. Cys-100 and Cys-196 are disulfide-bonded. Gly-124 provides a ligand contact to ATP. The tract at residues 146–148 is interaction with tRNA; it reads KDQ. Cys-196 acts as the Cysteine persulfide intermediate in catalysis. The interval 315–316 is interaction with tRNA; it reads RY.

The protein belongs to the MnmA/TRMU family.

The protein resides in the cytoplasm. The catalysed reaction is S-sulfanyl-L-cysteinyl-[protein] + uridine(34) in tRNA + AH2 + ATP = 2-thiouridine(34) in tRNA + L-cysteinyl-[protein] + A + AMP + diphosphate + H(+). In terms of biological role, catalyzes the 2-thiolation of uridine at the wobble position (U34) of tRNA, leading to the formation of s(2)U34. The protein is tRNA-specific 2-thiouridylase MnmA of Dechloromonas aromatica (strain RCB).